Reading from the N-terminus, the 297-residue chain is Farnesyl diphosphate synthase (297 aa).

Isopentenyl diphosphate contacts are provided by Lys-47, Arg-50, and His-79. The Mg(2+) site is built by Asp-86 and Asp-92. Arg-97 is a (2E)-geranyl diphosphate binding site. Arg-98 contributes to the isopentenyl diphosphate binding site. (2E)-geranyl diphosphate is bound by residues Lys-183, Thr-184, Gln-221, and Lys-238.

The protein belongs to the FPP/GGPP synthase family. Mg(2+) serves as cofactor.

The protein localises to the cytoplasm. It catalyses the reaction isopentenyl diphosphate + (2E)-geranyl diphosphate = (2E,6E)-farnesyl diphosphate + diphosphate. The sequence is that of Farnesyl diphosphate synthase from Geobacillus stearothermophilus (Bacillus stearothermophilus).